The sequence spans 260 residues: Indole-3-glycerol phosphate synthase (260 aa).

It belongs to the TrpC family.

The enzyme catalyses 1-(2-carboxyphenylamino)-1-deoxy-D-ribulose 5-phosphate + H(+) = (1S,2R)-1-C-(indol-3-yl)glycerol 3-phosphate + CO2 + H2O. The protein operates within amino-acid biosynthesis; L-tryptophan biosynthesis; L-tryptophan from chorismate: step 4/5. The protein is Indole-3-glycerol phosphate synthase of Desulfotalea psychrophila (strain LSv54 / DSM 12343).